The chain runs to 244 residues: Orotidine 5'-phosphate decarboxylase (244 aa).

Residues Asp10, Lys32, 59 to 68 (DLKLHDIPNT), Thr122, Arg184, Gln193, Gly213, and Arg214 each bind substrate. The active-site Proton donor is the Lys61.

Belongs to the OMP decarboxylase family. Type 1 subfamily. Homodimer.

It catalyses the reaction orotidine 5'-phosphate + H(+) = UMP + CO2. It participates in pyrimidine metabolism; UMP biosynthesis via de novo pathway; UMP from orotate: step 2/2. Catalyzes the decarboxylation of orotidine 5'-monophosphate (OMP) to uridine 5'-monophosphate (UMP). The chain is Orotidine 5'-phosphate decarboxylase from Geobacillus kaustophilus (strain HTA426).